Consider the following 325-residue polypeptide: Apoptosis-enhancing nuclease (325 aa).

A Nucleolar localization signal motif is present at residues 27–35 (RKRHKRRSR). Residues 53 to 105 (LSMPPEPGSSPLPTPFGAVTATEDASSGKQCPRAGSGGAPCSRRPAPGKASGP) form a disordered region. The span at 56–66 (PPEPGSSPLPT) shows a compositional bias: pro residues. One can recognise an Exonuclease domain in the interval 110-266 (CVAIDCEMVG…EDATTAMELY (157 aa)). The short motif at 165–188 (RQHMCKAIPFQVAQKEILKLLKGK) is the Nuclear localization signal element. Residues 281–325 (LWTCPEDREPDSSTDMEQYMEDQYWPDDLAHGSRGGAREAQDRRN) form a disordered region. Basic and acidic residues predominate over residues 308-325 (DLAHGSRGGAREAQDRRN).

The protein resides in the nucleus. The protein localises to the nucleolus. Functionally, exonuclease with activity against single- and double-stranded DNA and RNA. Mediates p53-induced apoptosis. When induced by p53 following DNA damage, digests double-stranded DNA to form single-stranded DNA and amplifies DNA damage signals, leading to enhancement of apoptosis. The polypeptide is Apoptosis-enhancing nuclease (AEN) (Pongo abelii (Sumatran orangutan)).